The following is a 471-amino-acid chain: Ribosomal protein uS12 methylthiotransferase RimO (471 aa).

The MTTase N-terminal domain maps to 2–122 (IKVSLISLGC…VAPIIQEIYA (121 aa)). [4Fe-4S] cluster is bound by residues cysteine 11, cysteine 47, cysteine 84, cysteine 166, cysteine 170, and cysteine 173. The region spanning 152–395 (LTPKHFAYVK…MALQKQIAAD (244 aa)) is the Radical SAM core domain. Residues 398–458 (KTYVGRTLRV…DYDLLALPPG (61 aa)) form the TRAM domain.

The protein belongs to the methylthiotransferase family. RimO subfamily. [4Fe-4S] cluster is required as a cofactor.

Its subcellular location is the cytoplasm. The catalysed reaction is L-aspartate(89)-[ribosomal protein uS12]-hydrogen + (sulfur carrier)-SH + AH2 + 2 S-adenosyl-L-methionine = 3-methylsulfanyl-L-aspartate(89)-[ribosomal protein uS12]-hydrogen + (sulfur carrier)-H + 5'-deoxyadenosine + L-methionine + A + S-adenosyl-L-homocysteine + 2 H(+). Catalyzes the methylthiolation of an aspartic acid residue of ribosomal protein uS12. The protein is Ribosomal protein uS12 methylthiotransferase RimO of Opitutus terrae (strain DSM 11246 / JCM 15787 / PB90-1).